The sequence spans 374 residues: DNA replication and repair protein RecF (374 aa).

Residue 34–41 participates in ATP binding; that stretch reads GDNGAGKT.

Belongs to the RecF family.

The protein localises to the cytoplasm. Its function is as follows. The RecF protein is involved in DNA metabolism; it is required for DNA replication and normal SOS inducibility. RecF binds preferentially to single-stranded, linear DNA. It also seems to bind ATP. The protein is DNA replication and repair protein RecF of Rhizobium etli (strain ATCC 51251 / DSM 11541 / JCM 21823 / NBRC 15573 / CFN 42).